The primary structure comprises 201 residues: Small ribosomal subunit protein uS4 (201 aa).

Residues 91–155 (SRLDNVVYRA…STLPFQVARE (65 aa)) form the S4 RNA-binding domain.

Belongs to the universal ribosomal protein uS4 family. Part of the 30S ribosomal subunit. Contacts protein S5. The interaction surface between S4 and S5 is involved in control of translational fidelity.

Functionally, one of the primary rRNA binding proteins, it binds directly to 16S rRNA where it nucleates assembly of the body of the 30S subunit. In terms of biological role, with S5 and S12 plays an important role in translational accuracy. The polypeptide is Small ribosomal subunit protein uS4 (Rhodococcus jostii (strain RHA1)).